The sequence spans 499 residues: Endoglucanase (499 aa).

The signal sequence occupies residues Met-1–Ala-29. Substrate is bound by residues His-65, Trp-69–Tyr-70, Tyr-96, and His-131. Residue Glu-169 is the Proton donor of the active site. Tyr-231 lines the substrate pocket. The active-site Nucleophile is Glu-257. Substrate contacts are provided by residues Ala-263–Ser-264, Trp-291, and Lys-296–Glu-298. The span at Arg-330 to Pro-340 shows a compositional bias: basic and acidic residues. Positions Arg-330–Gly-353 are disordered. The region spanning Gln-350–Asn-499 is the CBM3 domain.

The protein belongs to the glycosyl hydrolase 5 (cellulase A) family.

The enzyme catalyses Endohydrolysis of (1-&gt;4)-beta-D-glucosidic linkages in cellulose, lichenin and cereal beta-D-glucans.. The protein is Endoglucanase (bglC) of Bacillus subtilis.